The primary structure comprises 225 residues: Iron-sulfur flavoprotein CD630_04720 (225 aa).

The [4Fe-4S] cluster site is built by cysteine 49, cysteine 52, cysteine 55, and cysteine 61.

It belongs to the SsuE family. Isf subfamily. As to quaternary structure, homodimer. FMN is required as a cofactor. The cofactor is [4Fe-4S] cluster.

Functionally, redox-active protein probably involved in electron transport. The protein is Iron-sulfur flavoprotein CD630_04720 of Clostridioides difficile (strain 630) (Peptoclostridium difficile).